We begin with the raw amino-acid sequence, 382 residues long: Acetyltransferase eriL (382 aa).

6 helical membrane-spanning segments follow: residues 5-25 (LQPL…LGAV), 33-53 (ALLF…TTTG), 59-79 (IVTW…LLIN), 146-166 (TLFY…SPVF), 192-212 (LWSY…ALGV), and 335-355 (GYMW…DPQF).

This sequence belongs to the wax synthase family.

Its subcellular location is the membrane. It carries out the reaction cyathatriol + acetyl-CoA = 11-O-acetylcyathatriol + CoA. The enzyme catalyses cyathin A3 + acetyl-CoA = 11-O-acetylcyathin A3 + CoA. It participates in secondary metabolite biosynthesis. Its function is as follows. Acetyltransferase; part of the gene cluster that mediates the biosynthesis of erinacines, cyathane-xylosides that show unique biological activities, including leishmanicidal activity, stimulating activity for nerve growth-factor synthesis, and agonistic activity toward the kappa opioid receptor. Within the pathway, eriL converts cyathatriol into 11-O-acetyl-cyathatriol. EriL is also able to acetylate cyathin A3 to produce 11-O-acetylcyathin A3. The first step of the erinacines biosynthesis pathway is catalyzed by the geranylgeranyl diphosphate (GGPP) synthase eriE via conversion of farnesyl pyrophosphate and isopentyl pyrophosphate into geranylgeranyl pyrophosphate (GGPP). GGPP is then substrate of the diterpene cyclase eriG for the production of cyatha-3,12-diene. The cytochrome P450 monooxygenase eriI then hydroxylates cyatha-3,12-diene at C-14 of the seven-membered ring to produce erinacol, which is further hydroxylated at C-15 by the cytochrome P450 monooxygenase eriC to yield cyathadiol. The cytochrome P450 monooxygenase eriA then catalyzes C-11 hydroxylation in the presence of the short chain dehydrogenase/reductase (SDR) eriH, which leads to the production of cyathatriol. The acetyltransferase eriL converts cyathatriol into 11-O-acetyl-cyathatriol. The SDR eriH catalyzes further oxidation of 11-O-acetyl-cyathatriol into 1-O-acetylcyathin A3. Finally, the glycosyl transferase eriJ tranfers xylose from UDP-xylose onto C-14 of 11-O-acetyl-cyathatriol to form eracine Q. EriJ is also able to convert 11-O-acetyl-cyathatriol to eracine Q2 by using UDP-D-glucose as cosubstrate, but at a lower rate. This chain is Acetyltransferase eriL, found in Hericium erinaceus (Lion's mane mushroom).